We begin with the raw amino-acid sequence, 143 residues long: Transcriptional regulator MraZ (143 aa).

SpoVT-AbrB domains are found at residues 5–47 (EYQH…PLNE) and 76–119 (ATEC…SDER).

This sequence belongs to the MraZ family. In terms of assembly, forms oligomers.

The protein resides in the cytoplasm. Its subcellular location is the nucleoid. The protein is Transcriptional regulator MraZ of Enterococcus faecalis (strain ATCC 700802 / V583).